The following is a 281-amino-acid chain: MSAVNWVFTLNFAGEVPVLSFDERVQYAVWQHERVNHDHIQGVIQLKKKAKMNTVKNIIGGNPHLEKMKGSIEEASAYAQKEESRVAGPWSYGELLKKGSHKRKIMELIKDPENELEEPQKYRRAMAWSAMDESRKLAEEGGFPYTLYSWQETVLGLLEEEPNDRIIIWVYGPNGNEGKSQFGKFLGLKKDYLYLPGGKTQDMTYMLMKNPKANVVMDIPRCNSEYLNYQFMELIKNRTIFSYKYEPVGCIINNKIHVIVLANVLPDYEKISQDRIKIIYC.

The CRESS-DNA virus Rep endonuclease domain occupies 1–95 (MSAVNWVFTL…VAGPWSYGEL (95 aa)). The short motif at 7–10 (VFTL) is the RCR-1 element. Residues E33 and H39 each contribute to the a divalent metal cation site. An RCR-2 motif is present at residues 39 to 41 (HIQ). Positions 48-69 (KKAKMNTVKNIIGGNPHLEKMK) match the Nuclear localization signal motif. The active-site For DNA cleavage activity is the Y78. The RCR-3 signature appears at 78 to 81 (YAQK). E83 provides a ligand contact to a divalent metal cation. The Nuclear localization signal signature appears at 95 to 101 (LLKKGSH). 178–180 (GKS) contributes to the ATP binding site.

This sequence belongs to the nanoviridea/circoviridae replication-associated protein family. As to quaternary structure, homooligomer (Potential). Rep binds to repeated DNA motifs (iterons). It depends on Mg(2+) as a cofactor. Requires Mn(2+) as cofactor.

It localises to the host nucleus. It catalyses the reaction ATP + H2O = ADP + phosphate + H(+). In terms of biological role, initiates and terminates the replication only of its own subviral DNA molecule. The closed circular ssDNA genome is first converted to a superhelical dsDNA. Rep binds a specific hairpin at the genome origin of replication. Introduces an endonucleolytic nick within the intergenic region of the genome, thereby initiating the rolling circle replication (RCR). Following cleavage, binds covalently to the 5'-phosphate of DNA as a tyrosyl ester. The cleavage gives rise to a free 3'-OH that serves as a primer for the cellular DNA polymerase. The polymerase synthesizes the (+) strand DNA by rolling circle mechanism. After one round of replication, a Rep-catalyzed nucleotidyl transfer reaction releases a circular single-stranded virus genome, thereby terminating the replication. Displays origin-specific DNA cleavage, nucleotidyl transferase, ATPase and helicase activities. The protein is Para-Rep C9 (C9) of Faba bean necrotic yellows C9 alphasatellite (FBNYC9A).